The chain runs to 263 residues: HTH-type transcriptional repressor NanR (263 aa).

A disordered region spans residues 1 to 22 (MGLMNAFDSQTEDSSPAIGRNL). Residues 30–98 (KKLSEMVEEE…NGERARVSRP (69 aa)) enclose the HTH gntR-type domain. Positions 58 to 77 (ERELMAFFNVGRPSVREALA) form a DNA-binding region, H-T-H motif.

The protein belongs to the NanR family.

Its function is as follows. Transcriptional repressor that controls expression of the genes required for the catabolism of sialic acids. This Shigella sonnei (strain Ss046) protein is HTH-type transcriptional repressor NanR.